A 1860-amino-acid chain; its full sequence is Golgi-specific brefeldin A-resistance guanine nucleotide exchange factor 1 (1860 aa).

The interval 1–211 (MVDKNIYIIQ…EPKNYVGTNM (211 aa)) is DCB; DCB:DCB domain and DCB:HUS domain interaction. The interaction with RAB1B stretch occupies residues 1–381 (MVDKNIYIIQ…SVHDMDYVNP (381 aa)). Disordered regions lie at residues 215–266 (KMRA…GGMP) and 281–372 (AASA…DSAS). A compositionally biased stretch (basic residues) spans 227-241 (WKKQKRSPRPPRHMT). Composition is skewed to polar residues over residues 250–262 (PTPN…SNLT), 290–301 (TDSGLEFSSQTT), and 335–351 (DLQQ…SASV). 2 positions are modified to phosphoserine: Ser-350 and Ser-353. Thr-508 bears the Phosphothreonine mark. Positions 531–551 (RIPSFVTELYINYDCDYYCSN) are HUS; DCB:HUS domain interaction. A compositionally biased stretch (basic and acidic residues) spans 620–631 (TREASNTERTAS). A disordered region spans residues 620–666 (TREASNTERTASDGKAVGMASDIPGLHLPGGGRLPPEHGKSGCSDLE). Ser-663 carries the phosphoserine modification. The 191-residue stretch at 693-883 (ELIEIKNKKK…EDMYHAIKNE (191 aa)) folds into the SEC7 domain. Residues 887–1371 (MPEEQTGLVR…PSRPGPSPLI (485 aa)) are phosphatidylinositol-phosphate binding; required for translocation to the leading edge and for ARF1 activation upon GPCR signaling. The span at 1285 to 1297 (QATARADAPDAGA) shows a compositional bias: low complexity. The interval 1285–1336 (QATARADAPDAGAQSDSELPSYHQNDVSLDRGYTSDSEVYTDHGRPGKIHRS) is disordered. Residues 1298 to 1311 (QSDSELPSYHQNDV) are compositionally biased toward polar residues. Ser-1299 is subject to Phosphoserine. The residue at position 1317 (Tyr-1317) is a Phosphotyrosine. Phosphoserine is present on residues Ser-1319, Ser-1321, and Ser-1336. Thr-1338 is subject to Phosphothreonine; by AMPK. Disordered regions lie at residues 1351-1371 (GKDD…SPLI), 1431-1484 (CKSQ…DEGV), and 1726-1809 (PMPM…QPPL). Over residues 1433–1447 (SQEKRGKSHKYDSKG) the composition is skewed to basic and acidic residues. Residues 1465 to 1474 (TSSQHASRGG) show a composition bias toward polar residues. Residues Ser-1476, Ser-1774, and Ser-1785 each carry the phosphoserine modification. Residues 1775 to 1792 (PRAASSSSPGSPVASSPS) show a composition bias toward low complexity.

As to quaternary structure, can form homodimers and probably homotetramers. Interacts with COPG1; the interaction is independent of ARF1 activation. Interacts with ARF1, ARF3, ARF4 and ARF5. Interacts with RAB1B (GTP-bound form); required for GBF1 membrane association. Interacts with GGA1, GGA2 and GGA3. Interacts with USO1. Interacts (via SEC7 domain) with PNPLA2 (via C-terminus); the interaction is direct. Interacts with ARMH3. In terms of assembly, (Microbial infection) Interacts with poliovirus protein 3A. AMPK-mediated phosphorylation at Thr-1338 is induced by 2-deoxyglucose (2-DG) and AICA ribonucleotide, and occurs during mitosis leading to membrane disassociation and inactivation of ARF1 during mitosis. In terms of tissue distribution, ubiquitous.

It localises to the golgi apparatus. The protein localises to the cis-Golgi network. The protein resides in the endoplasmic reticulum-Golgi intermediate compartment. Its subcellular location is the trans-Golgi network. It is found in the cytoplasm. It localises to the lipid droplet. The protein localises to the membrane. Its activity is regulated as follows. Inhibited by brefeldin A (BFA). Inhibited by golgicide A (GCA). Functionally, guanine-nucleotide exchange factor (GEF) for members of the Arf family of small GTPases involved in trafficking in the early secretory pathway; its GEF activity initiates the coating of nascent vesicles via the localized generation of activated ARFs through replacement of GDP with GTP. Recruitment to cis-Golgi membranes requires membrane association of Arf-GDP and can be regulated by ARF1, ARF3, ARF4 and ARF5. Involved in the recruitment of the COPI coat complex to the endoplasmic reticulum exit sites (ERES), and the endoplasmic reticulum-Golgi intermediate (ERGIC) and cis-Golgi compartments which implicates ARF1 activation. Involved in COPI vesicle-dependent retrograde transport from the ERGIC and cis-Golgi compartments to the endoplasmic reticulum (ER). Involved in the trans-Golgi network recruitment of GGA1, GGA2, GGA3, BIG1, BIG2, and the AP-1 adaptor protein complex related to chlathrin-dependent transport; the function requires its GEF activity (probably at least in part on ARF4 and ARF5). Has GEF activity towards ARF1. Has in vitro GEF activity towards ARF5. Involved in the processing of PSAP. Required for the assembly of the Golgi apparatus. The AMPK-phosphorylated form is involved in Golgi disassembly during mitotis and under stress conditions. May be involved in the COPI vesicle-dependent recruitment of PNPLA2 to lipid droplets; however, this function is under debate. In neutrophils, involved in G protein-coupled receptor (GPCR)-mediated chemotaxis und superoxide production. Proposed to be recruited by phosphatidylinositol-phosphates generated upon GPCR stimulation to the leading edge where it recruits and activates ARF1, and is involved in recruitment of GIT2 and the NADPH oxidase complex. Plays a role in maintaining mitochondrial morphology. The polypeptide is Golgi-specific brefeldin A-resistance guanine nucleotide exchange factor 1 (GBF1) (Homo sapiens (Human)).